The primary structure comprises 938 residues: Protein translocase subunit SecA (938 aa).

Residues Gln90, 108–112 (GEGKT), and Asp504 each bind ATP.

It belongs to the SecA family. Monomer and homodimer. Part of the essential Sec protein translocation apparatus which comprises SecA, SecYEG and auxiliary proteins SecDF. Other proteins may also be involved.

It localises to the cell inner membrane. The protein resides in the cellular thylakoid membrane. The protein localises to the cytoplasm. It catalyses the reaction ATP + H2O + cellular proteinSide 1 = ADP + phosphate + cellular proteinSide 2.. In terms of biological role, part of the Sec protein translocase complex. Interacts with the SecYEG preprotein conducting channel. Has a central role in coupling the hydrolysis of ATP to the transfer of proteins into and across the cell membrane, serving as an ATP-driven molecular motor driving the stepwise translocation of polypeptide chains across the membrane. Its function is as follows. Probably participates in protein translocation into and across both the cytoplasmic and thylakoid membranes in cyanobacterial cells. This is Protein translocase subunit SecA from Picosynechococcus sp. (strain ATCC 27264 / PCC 7002 / PR-6) (Agmenellum quadruplicatum).